The sequence spans 533 residues: Kelch-like protein 33 (533 aa).

Kelch repeat units lie at residues 210 to 258 (ALVV…ALPA), 273 to 322 (ELYV…ALDG), 323 to 369 (KLYA…ILEG), 371 to 418 (LYVS…ALGG), 419 to 465 (RLYV…VLQG), and 467 to 514 (LLVL…ILTL).

This chain is Kelch-like protein 33 (KLHL33), found in Homo sapiens (Human).